A 1144-amino-acid polypeptide reads, in one-letter code: ATP-dependent helicase/deoxyribonuclease subunit B (1144 aa).

The UvrD-like helicase ATP-binding domain maps to 1–276; sequence MAIRYVFGRA…IDLDRNERPV (276 aa). Residue 8–15 coordinates ATP; it reads GRAGRGKS. The region spanning 274-584 is the UvrD-like helicase C-terminal domain; it reads RPVLPKVQEI…LVGSIERSKS (311 aa). The [4Fe-4S] cluster site is built by Cys-784, Cys-1102, Cys-1105, and Cys-1111.

The protein belongs to the helicase family. AddB/RexB type 1 subfamily. Heterodimer of AddA and AddB. Requires Mg(2+) as cofactor. [4Fe-4S] cluster is required as a cofactor.

In terms of biological role, the heterodimer acts as both an ATP-dependent DNA helicase and an ATP-dependent, dual-direction single-stranded exonuclease. Recognizes the chi site generating a DNA molecule suitable for the initiation of homologous recombination. The AddB subunit has 5' -&gt; 3' nuclease activity but not helicase activity. The protein is ATP-dependent helicase/deoxyribonuclease subunit B of Alkaliphilus oremlandii (strain OhILAs) (Clostridium oremlandii (strain OhILAs)).